We begin with the raw amino-acid sequence, 332 residues long: Casein kinase II subunit alpha (332 aa).

The Protein kinase domain maps to 43-327 (YEIIRKVGRG…TCQEAMAHPY (285 aa)). ATP-binding positions include 49–57 (VGRGKYSEV) and lysine 72. The active-site Proton acceptor is the aspartate 160.

The protein belongs to the protein kinase superfamily. Ser/Thr protein kinase family. CK2 subfamily. Tetramer composed of two alpha chains, one beta chain and one beta' chain.

It catalyses the reaction L-seryl-[protein] + ATP = O-phospho-L-seryl-[protein] + ADP + H(+). The enzyme catalyses L-threonyl-[protein] + ATP = O-phospho-L-threonyl-[protein] + ADP + H(+). Catalytic subunit of a constitutively active serine/threonine-protein kinase complex that phosphorylates a large number of substrates containing acidic residues C-terminal to the phosphorylated serine or threonine. This chain is Casein kinase II subunit alpha, found in Schizosaccharomyces pombe (strain 972 / ATCC 24843) (Fission yeast).